The following is a 143-amino-acid chain: Large ribosomal subunit protein uL15 (143 aa).

The tract at residues 1–52 (MELNTIQPADGAKHYKRRVGRGIGSGLGKTAGRGHKGQKSRSGGFHKVGFEG) is disordered. Gly residues predominate over residues 21–31 (RGIGSGLGKTA).

This sequence belongs to the universal ribosomal protein uL15 family. Part of the 50S ribosomal subunit.

In terms of biological role, binds to the 23S rRNA. The sequence is that of Large ribosomal subunit protein uL15 from Herminiimonas arsenicoxydans.